Reading from the N-terminus, the 269-residue chain is Formamidopyrimidine-DNA glycosylase (269 aa).

The active-site Schiff-base intermediate with DNA is the proline 2. Glutamate 3 acts as the Proton donor in catalysis. Residue lysine 57 is the Proton donor; for beta-elimination activity of the active site. Residues histidine 90, arginine 109, and arginine 150 each contribute to the DNA site. The segment at 235–269 (QVYGRKGEPCRVCGTPVVATKHAQRATFYCRHCQK) adopts an FPG-type zinc-finger fold. Arginine 259 functions as the Proton donor; for delta-elimination activity in the catalytic mechanism.

This sequence belongs to the FPG family. As to quaternary structure, monomer. Zn(2+) is required as a cofactor.

It carries out the reaction Hydrolysis of DNA containing ring-opened 7-methylguanine residues, releasing 2,6-diamino-4-hydroxy-5-(N-methyl)formamidopyrimidine.. The enzyme catalyses 2'-deoxyribonucleotide-(2'-deoxyribose 5'-phosphate)-2'-deoxyribonucleotide-DNA = a 3'-end 2'-deoxyribonucleotide-(2,3-dehydro-2,3-deoxyribose 5'-phosphate)-DNA + a 5'-end 5'-phospho-2'-deoxyribonucleoside-DNA + H(+). Functionally, involved in base excision repair of DNA damaged by oxidation or by mutagenic agents. Acts as a DNA glycosylase that recognizes and removes damaged bases. Has a preference for oxidized purines, such as 7,8-dihydro-8-oxoguanine (8-oxoG). Has AP (apurinic/apyrimidinic) lyase activity and introduces nicks in the DNA strand. Cleaves the DNA backbone by beta-delta elimination to generate a single-strand break at the site of the removed base with both 3'- and 5'-phosphates. The protein is Formamidopyrimidine-DNA glycosylase of Salmonella arizonae (strain ATCC BAA-731 / CDC346-86 / RSK2980).